The following is a 563-amino-acid chain: 3-oxosteroid 1-dehydrogenase (563 aa).

7 to 36 (DVVVVGSGAAGMVAALVAAHRGLSTVVVEK) provides a ligand contact to FAD.

Belongs to the FAD-dependent oxidoreductase 2 family. 3-oxosteroid dehydrogenase subfamily. FAD is required as a cofactor.

The enzyme catalyses a 3-oxosteroid + A = a 3-oxo-Delta(1)-steroid + AH2. It catalyses the reaction a 3-oxo-Delta(4)-steroid + A = a 3-oxo-Delta(1,4)-steroid + AH2. It carries out the reaction 3-oxochol-4-en-22-oyl-CoA + NAD(+) = 3-oxochola-1,4-dien-22-oyl-CoA + NADH + H(+). Its function is as follows. Involved in the degradation of cholesterol. Catalyzes the elimination of the C-1 and C-2 hydrogen atoms of the A-ring from the polycyclic ring structure of 3-ketosteroids. Has a clear preference for 3-ketosteroids with a saturated A-ring, displaying highest activity on 5alpha-AD (5alpha-androstane-3,17-dione) and 5alpha-T (5alpha-testosterone, also known as 17beta-hydroxy-5alpha-androstane-3-one). Is also involved in the formation of 3-keto-1,4-diene-steroid from 3-keto-4-ene-steroid. Catalyzes the conversion of 3-oxo-23,24-bisnorchol-4-en-22-oyl-coenzyme A thioester (4-BNC-CoA) to 3-oxo-23,24-bisnorchola-1,4-dien-22-oyl-coenzyme A thioester (1,4-BNC-CoA). In Mycobacterium tuberculosis (strain ATCC 25618 / H37Rv), this protein is 3-oxosteroid 1-dehydrogenase (kstD).